The following is a 510-amino-acid chain: NAD(P)H-quinone oxidoreductase subunit 2 B, chloroplastic (510 aa).

The next 14 helical transmembrane spans lie at 24–44 (LLLFHGSFIFPECILIFGLIL), 59–79 (WFYFISSTSLVISITALLFRW), 99–119 (IFQFLILLCSTLCIPLSVEYI), 124–144 (MAITEFLLFVLTATLGGMFLC), 149–169 (LITIFVALECFSLCSYLLSGY), 184–204 (LLMGGASSSILVYGFSWLYGL), 229–249 (ISIALIFITVGLGFKLSLAPF), 261–281 (PTPVVAFLSVTSKVAALALAT), 295–315 (WHLLLEILAILSMILGNLLAI), 323–343 (MLAYSSIGQIGYVIIGIIVGD), 354–374 (YMLFYISMNLGTFACIVLFGL), 395–415 (ALSLALCLLSLGGLPPLAGFF), 418–438 (LYLFWCGWQAGLYFLVSIGLL), and 484–504 (MTVCVIASTILGISMNPILAI).

The protein belongs to the complex I subunit 2 family. NDH is composed of at least 16 different subunits, 5 of which are encoded in the nucleus.

It localises to the plastid. It is found in the chloroplast thylakoid membrane. It carries out the reaction a plastoquinone + NADH + (n+1) H(+)(in) = a plastoquinol + NAD(+) + n H(+)(out). The enzyme catalyses a plastoquinone + NADPH + (n+1) H(+)(in) = a plastoquinol + NADP(+) + n H(+)(out). Its function is as follows. NDH shuttles electrons from NAD(P)H:plastoquinone, via FMN and iron-sulfur (Fe-S) centers, to quinones in the photosynthetic chain and possibly in a chloroplast respiratory chain. The immediate electron acceptor for the enzyme in this species is believed to be plastoquinone. Couples the redox reaction to proton translocation, and thus conserves the redox energy in a proton gradient. The polypeptide is NAD(P)H-quinone oxidoreductase subunit 2 B, chloroplastic (Zea mays (Maize)).